Consider the following 519-residue polypeptide: bZIP transcription factor 30 (519 aa).

Disordered regions lie at residues 1 to 30, 45 to 83, 108 to 202, 222 to 295, and 315 to 339; these read MGGG…IPKH, FRHP…QPSS, TGAG…RKPE, VLNS…TGRH, and SSLK…NSSA. Pro residues predominate over residues 51 to 61; it reads GAPPPPIPPIS. The segment covering 149-173 has biased composition (polar residues); sequence SDVTFGFSSMMSQNQKSPPLSSLER. A compositionally biased stretch (basic and acidic residues) spans 187 to 202; that stretch reads VKKEPREGFYKGRKPE. Composition is skewed to low complexity over residues 244–268 and 317–329; these read SRGS…SASG and LKLP…KVSP. Positions 330–339 are enriched in polar residues; sequence TNSGEGNSSA. Residues 372 to 393 form a basic motif region; the sequence is KRVKRILANRVSAARSKERKTR. A coiled-coil region spans residues 386–460; that stretch reads RSKERKTRYM…SEKLNEEVQR (75 aa). The leucine-zipper stretch occupies residues 398 to 433; sequence LEHKVQTLQTEATTLSAQLTHLQRDSMGLTNQNSEL. Positions 465–519 are disordered; that stretch reads IGEPNRRQSGSSSSESKMSLNPEMFQQLSISQLQHQQMQHSNQCSTMKAKHTSND. 2 stretches are compositionally biased toward low complexity: residues 473–483 and 490–509; these read SGSSSSESKMS and QQLS…NQCS.

In terms of assembly, interacts with WUS, HEC1, KNAT1, KNAT2, HAT1, BEL1, and NGA1. Expressed in inflorescence meristem, floral organ primordia, gynoecia, ovules and carpel margin meristem.

It is found in the nucleus. Transcription factor that acts as a repressor of reproductive development, meristem size and plant growth. Acts as a transcriptional repressor in inflorescence tissues. Interacts with well known regulators of meristem and gynoecium development such as WUS, HEC1, KNAT1, KNAT2, HAT1, BEL1 and NGA1. Acts as a positive regulator of JAG and OFP1 expression in developing gynoecia. This Arabidopsis thaliana (Mouse-ear cress) protein is bZIP transcription factor 30.